A 366-amino-acid polypeptide reads, in one-letter code: Probable cyclin-dependent kinase 10 (366 aa).

In terms of domain architecture, Protein kinase spans Phe-7–Phe-293. ATP contacts are provided by residues Ile-13–Val-21 and Lys-36. Residue Asp-132 is the Proton acceptor of the active site. Positions Phe-315–Asn-358 are enriched in low complexity. The segment at Phe-315–Lys-366 is disordered.

Belongs to the protein kinase superfamily. CMGC Ser/Thr protein kinase family. CDC2/CDKX subfamily.

It catalyses the reaction L-seryl-[protein] + ATP = O-phospho-L-seryl-[protein] + ADP + H(+). It carries out the reaction L-threonyl-[protein] + ATP = O-phospho-L-threonyl-[protein] + ADP + H(+). In Dictyostelium discoideum (Social amoeba), this protein is Probable cyclin-dependent kinase 10 (cdk10).